A 1356-amino-acid polypeptide reads, in one-letter code: Probable aldehyde oxidase 3 (1356 aa).

One can recognise a 2Fe-2S ferredoxin-type domain in the interval 10–97 (RAVVVAVNGE…HCAVTTSEGI (88 aa)). [2Fe-2S] cluster-binding residues include cysteine 49, cysteine 54, cysteine 57, and cysteine 79. The region spanning 245–437 (VVVTGDGWFH…TFQTFRAAPR (193 aa)) is the FAD-binding PCMH-type domain. Positions 552-576 (NGSFTNGTANGIVDSSPEKHSNVDS) are disordered.

This sequence belongs to the xanthine dehydrogenase family. Aldehyde oxidases (AO) are homodimers and heterodimers of AO subunits. [2Fe-2S] cluster is required as a cofactor. The cofactor is FAD. It depends on Mo-molybdopterin as a cofactor.

It catalyses the reaction an aldehyde + O2 + H2O = a carboxylate + H2O2 + H(+). The chain is Probable aldehyde oxidase 3 from Oryza sativa subsp. japonica (Rice).